The primary structure comprises 256 residues: Probable ABC transporter ATP-binding protein SPy_0285/M5005_Spy0242 (256 aa).

Residues 4 to 246 (LEINNLHVSI…EKEGYAGIAQ (243 aa)) enclose the ABC transporter domain. 36–43 (GPNGTGKS) lines the ATP pocket.

This sequence belongs to the ABC transporter superfamily. Ycf16 family.

It is found in the cell membrane. The chain is Probable ABC transporter ATP-binding protein SPy_0285/M5005_Spy0242 from Streptococcus pyogenes serotype M1.